Reading from the N-terminus, the 213-residue chain is Ras-like protein rasX (213 aa).

16-23 (GDGGVGKT) provides a ligand contact to GTP. The short motif at 38–46 (YDPTIEDSY) is the Effector region element. GTP contacts are provided by residues 63–67 (DTAGQ) and 122–125 (NKSD). Cysteine methyl ester is present on Cys-210. Cys-210 carries the S-geranylgeranyl cysteine lipid modification. Residues 211–213 (KMM) constitute a propeptide, removed in mature form.

The protein belongs to the small GTPase superfamily. Ras family.

The protein resides in the cell membrane. It catalyses the reaction GTP + H2O = GDP + phosphate + H(+). In terms of biological role, ras proteins bind GDP/GTP and possess intrinsic GTPase activity. The polypeptide is Ras-like protein rasX (rasX) (Dictyostelium discoideum (Social amoeba)).